Here is a 321-residue protein sequence, read N- to C-terminus: 6-phosphogluconolactonase-like protein 1 (321 aa).

Residues 36-85 (GKVSRSTQMSGTSLNGNGNTESKTMERVNSVRSNASSRGGSEDGATKKLK) are disordered. The segment covering 39–57 (SRSTQMSGTSLNGNGNTES) has biased composition (polar residues). The segment covering 63–74 (VNSVRSNASSRG) has biased composition (low complexity). 2 positions are modified to phosphoserine: S65 and S68. Positions 75 to 85 (GSEDGATKKLK) are enriched in basic and acidic residues. Phosphothreonine is present on T320.

The protein belongs to the glucosamine/galactosamine-6-phosphate isomerase family. 6-phosphogluconolactonase subfamily.

It localises to the cytoplasm. The protein localises to the nucleus. In terms of biological role, may be involved in regulation of tRNA subcellular distribution. This is 6-phosphogluconolactonase-like protein 1 (SOL1) from Saccharomyces cerevisiae (strain ATCC 204508 / S288c) (Baker's yeast).